We begin with the raw amino-acid sequence, 275 residues long: 4-hydroxy-tetrahydrodipicolinate reductase (275 aa).

NAD(+)-binding positions include 13 to 18 (GAGGKM) and 108 to 110 (GTT). Residue H164 is the Proton donor/acceptor of the active site. Position 165 (H165) interacts with (S)-2,3,4,5-tetrahydrodipicolinate. K168 functions as the Proton donor in the catalytic mechanism. 174–175 (GT) provides a ligand contact to (S)-2,3,4,5-tetrahydrodipicolinate.

It belongs to the DapB family.

It localises to the cytoplasm. It catalyses the reaction (S)-2,3,4,5-tetrahydrodipicolinate + NAD(+) + H2O = (2S,4S)-4-hydroxy-2,3,4,5-tetrahydrodipicolinate + NADH + H(+). The catalysed reaction is (S)-2,3,4,5-tetrahydrodipicolinate + NADP(+) + H2O = (2S,4S)-4-hydroxy-2,3,4,5-tetrahydrodipicolinate + NADPH + H(+). Its pathway is amino-acid biosynthesis; L-lysine biosynthesis via DAP pathway; (S)-tetrahydrodipicolinate from L-aspartate: step 4/4. In terms of biological role, catalyzes the conversion of 4-hydroxy-tetrahydrodipicolinate (HTPA) to tetrahydrodipicolinate. This chain is 4-hydroxy-tetrahydrodipicolinate reductase, found in Picosynechococcus sp. (strain ATCC 27264 / PCC 7002 / PR-6) (Agmenellum quadruplicatum).